The sequence spans 479 residues: Adenosylhomocysteinase (479 aa).

Substrate is bound by residues threonine 65, aspartate 145, and glutamate 205. 206-208 (TTT) is a binding site for NAD(+). Substrate-binding residues include lysine 235 and aspartate 239. Residues asparagine 240, 269 to 274 (GYGDVG), glutamate 292, asparagine 327, 348 to 350 (IGH), and asparagine 393 each bind NAD(+).

The protein belongs to the adenosylhomocysteinase family. NAD(+) is required as a cofactor.

The protein localises to the cytoplasm. It catalyses the reaction S-adenosyl-L-homocysteine + H2O = L-homocysteine + adenosine. It participates in amino-acid biosynthesis; L-homocysteine biosynthesis; L-homocysteine from S-adenosyl-L-homocysteine: step 1/1. Its function is as follows. May play a key role in the regulation of the intracellular concentration of adenosylhomocysteine. The sequence is that of Adenosylhomocysteinase from Herminiimonas arsenicoxydans.